The following is a 352-amino-acid chain: DNA integrity scanning protein DisA (352 aa).

Residues 3 to 143 form the DAC domain; the sequence is DERIVLALKS…FKYSLSEVSV (141 aa). Residues G70, L88, and 101–105 each bind ATP; that span reads IRHRT.

This sequence belongs to the DisA family. In terms of assembly, homooctamer. Mg(2+) is required as a cofactor.

The enzyme catalyses 2 ATP = 3',3'-c-di-AMP + 2 diphosphate. In terms of biological role, participates in a DNA-damage check-point that is active prior to asymmetric division when DNA is damaged. DisA forms globular foci that rapidly scan along the chromosomes during sporulation, searching for lesions. When a lesion is present, DisA pauses at the lesion site. This triggers a cellular response that culminates in a temporary block in sporulation initiation. Functionally, also has diadenylate cyclase activity, catalyzing the condensation of 2 ATP molecules into cyclic di-AMP (c-di-AMP). c-di-AMP acts as a signaling molecule that couples DNA integrity with progression of sporulation. The rise in c-di-AMP level generated by DisA while scanning the chromosome, operates as a positive signal that advances sporulation; upon encountering a lesion, the DisA focus arrests at the damaged site and halts c-di-AMP synthesis. The chain is DNA integrity scanning protein DisA from Carboxydothermus hydrogenoformans (strain ATCC BAA-161 / DSM 6008 / Z-2901).